The chain runs to 296 residues: Co-chaperone protein DjlA (296 aa).

The Periplasmic portion of the chain corresponds to Met-1–Lys-15. The chain crosses the membrane as a helical span at residues Ile-16–Asn-39. At Phe-40–Trp-296 the chain is on the cytoplasmic side. A disordered region spans residues Gln-200–Pro-225. The segment covering Thr-211–Lys-221 has biased composition (polar residues). The 66-residue stretch at His-231–Trp-296 folds into the J domain.

As to quaternary structure, homodimer.

It localises to the cell inner membrane. Its function is as follows. Regulatory DnaK co-chaperone. Direct interaction between DnaK and DjlA is needed for the induction of the wcaABCDE operon, involved in the synthesis of a colanic acid polysaccharide capsule, possibly through activation of the RcsB/RcsC phosphotransfer signaling pathway. The colanic acid capsule may help the bacterium survive conditions outside the host. The sequence is that of Co-chaperone protein DjlA from Legionella pneumophila subsp. pneumophila (strain Philadelphia 1 / ATCC 33152 / DSM 7513).